The sequence spans 150 residues: Large ribosomal subunit protein bL9 (150 aa).

It belongs to the bacterial ribosomal protein bL9 family.

Binds to the 23S rRNA. The chain is Large ribosomal subunit protein bL9 from Streptococcus pyogenes serotype M5 (strain Manfredo).